We begin with the raw amino-acid sequence, 274 residues long: Urease accessory protein UreD (274 aa).

It belongs to the UreD family. In terms of assembly, ureD, UreF and UreG form a complex that acts as a GTP-hydrolysis-dependent molecular chaperone, activating the urease apoprotein by helping to assemble the nickel containing metallocenter of UreC. The UreE protein probably delivers the nickel.

It is found in the cytoplasm. Required for maturation of urease via the functional incorporation of the urease nickel metallocenter. In Enterobacter sp. (strain 638), this protein is Urease accessory protein UreD.